We begin with the raw amino-acid sequence, 238 residues long: Uridylate kinase (238 aa).

12 to 15 contacts ATP; the sequence is KLSG. Gly54 is a UMP binding site. ATP is bound by residues Gly55 and Arg59. UMP-binding positions include Asp74 and 135–142; that span reads TGNPFFTT. Thr162, Tyr168, and Asp171 together coordinate ATP.

It belongs to the UMP kinase family. As to quaternary structure, homohexamer.

It localises to the cytoplasm. It carries out the reaction UMP + ATP = UDP + ADP. It participates in pyrimidine metabolism; CTP biosynthesis via de novo pathway; UDP from UMP (UMPK route): step 1/1. With respect to regulation, inhibited by UTP. Catalyzes the reversible phosphorylation of UMP to UDP. This Bordetella pertussis (strain Tohama I / ATCC BAA-589 / NCTC 13251) protein is Uridylate kinase.